Consider the following 743-residue polypeptide: Phosphoribosylformylglycinamidine synthase subunit PurL (743 aa).

His54 is a catalytic residue. The ATP site is built by Tyr57 and Lys96. Glu98 serves as a coordination point for Mg(2+). Residues 99–102 and Arg121 each bind substrate; that span reads SHNH. His100 functions as the Proton acceptor in the catalytic mechanism. Asp122 is a Mg(2+) binding site. Gln245 lines the substrate pocket. Asp273 provides a ligand contact to Mg(2+). Residue 317–319 participates in substrate binding; sequence ESQ. Positions 501 and 538 each coordinate ATP. Residue Asn539 coordinates Mg(2+). Ser541 is a substrate binding site.

This sequence belongs to the FGAMS family. As to quaternary structure, monomer. Part of the FGAM synthase complex composed of 1 PurL, 1 PurQ and 2 PurS subunits.

It is found in the cytoplasm. It catalyses the reaction N(2)-formyl-N(1)-(5-phospho-beta-D-ribosyl)glycinamide + L-glutamine + ATP + H2O = 2-formamido-N(1)-(5-O-phospho-beta-D-ribosyl)acetamidine + L-glutamate + ADP + phosphate + H(+). It functions in the pathway purine metabolism; IMP biosynthesis via de novo pathway; 5-amino-1-(5-phospho-D-ribosyl)imidazole from N(2)-formyl-N(1)-(5-phospho-D-ribosyl)glycinamide: step 1/2. Functionally, part of the phosphoribosylformylglycinamidine synthase complex involved in the purines biosynthetic pathway. Catalyzes the ATP-dependent conversion of formylglycinamide ribonucleotide (FGAR) and glutamine to yield formylglycinamidine ribonucleotide (FGAM) and glutamate. The FGAM synthase complex is composed of three subunits. PurQ produces an ammonia molecule by converting glutamine to glutamate. PurL transfers the ammonia molecule to FGAR to form FGAM in an ATP-dependent manner. PurS interacts with PurQ and PurL and is thought to assist in the transfer of the ammonia molecule from PurQ to PurL. This is Phosphoribosylformylglycinamidine synthase subunit PurL from Halalkalibacterium halodurans (strain ATCC BAA-125 / DSM 18197 / FERM 7344 / JCM 9153 / C-125) (Bacillus halodurans).